Reading from the N-terminus, the 295-residue chain is Cytidine deaminase (295 aa).

2 consecutive CMP/dCMP-type deaminase domains span residues 48–168 (TDNQ…FGPS) and 187–295 (EDDD…YLSL). 89 to 91 (NME) contributes to the substrate binding site. Residue H102 participates in Zn(2+) binding. E104 acts as the Proton donor in catalysis. C129 and C132 together coordinate Zn(2+).

This sequence belongs to the cytidine and deoxycytidylate deaminase family. As to quaternary structure, homodimer. Zn(2+) is required as a cofactor.

It catalyses the reaction cytidine + H2O + H(+) = uridine + NH4(+). The enzyme catalyses 2'-deoxycytidine + H2O + H(+) = 2'-deoxyuridine + NH4(+). This enzyme scavenges exogenous and endogenous cytidine and 2'-deoxycytidine for UMP synthesis. This is Cytidine deaminase from Vibrio vulnificus (strain CMCP6).